The following is a 309-amino-acid chain: Malate dehydrogenase (309 aa).

NAD(+)-binding positions include 10-15 (GAGNVG) and Asp34. Residues Arg83 and Arg89 each coordinate substrate. Residues Asn96 and 119 to 121 (VTN) each bind NAD(+). Asn121 and Arg152 together coordinate substrate. His176 functions as the Proton acceptor in the catalytic mechanism.

The protein belongs to the LDH/MDH superfamily. MDH type 3 family.

It carries out the reaction (S)-malate + NAD(+) = oxaloacetate + NADH + H(+). Functionally, catalyzes the reversible oxidation of malate to oxaloacetate. The sequence is that of Malate dehydrogenase from Desulforudis audaxviator (strain MP104C).